The following is a 318-amino-acid chain: 1-phosphofructokinase (318 aa).

ATP is bound by residues 228–233 and 259–260; these read SMGTEG and GD. Residue D260 is the Proton acceptor of the active site.

This sequence belongs to the carbohydrate kinase PfkB family.

It carries out the reaction beta-D-fructose 1-phosphate + ATP = beta-D-fructose 1,6-bisphosphate + ADP + H(+). Its function is as follows. Catalyzes the ATP-dependent phosphorylation of fructose-l-phosphate to fructose-l,6-bisphosphate. This is 1-phosphofructokinase from Xanthomonas campestris pv. campestris (strain ATCC 33913 / DSM 3586 / NCPPB 528 / LMG 568 / P 25).